Reading from the N-terminus, the 308-residue chain is MITFLPIIFSILVVFTFVIGNFANGFIALVNSIEWVKRQKISFADQILTALAVSRVGLLWILLLNWYSTVLNPAFYSVEVRTIAYNLWAVINHFSNWLATSLSIFYLLKIANFSNLIFLHLRRRVKSVVLVILWGPLLFLVCHLFVVNMNEIIQTKEYEGNMTWKSKLRSAMYLSNTTVTILANLVPFILTLISFLLLICSLCKHLKKMQLRDKGSQDPSTKVHIKALQTVISLSLCAIYFLSIMISSWSLGRVENKAIFMFCKAIRFSYPSAHAFILIWGNKKLKQTLLSVLWNVRYCVKGQKLQSP.

Residue methionine 1 is a topological domain, extracellular. Residues 2–22 (ITFLPIIFSILVVFTFVIGNF) traverse the membrane as a helical segment. The Cytoplasmic portion of the chain corresponds to 23 to 46 (ANGFIALVNSIEWVKRQKISFADQ). A helical transmembrane segment spans residues 47–67 (ILTALAVSRVGLLWILLLNWY). Residues 68–86 (STVLNPAFYSVEVRTIAYN) lie on the Extracellular side of the membrane. Residues 87–107 (LWAVINHFSNWLATSLSIFYL) traverse the membrane as a helical segment. The Cytoplasmic portion of the chain corresponds to 108–126 (LKIANFSNLIFLHLRRRVK). The helical transmembrane segment at 127-147 (SVVLVILWGPLLFLVCHLFVV) threads the bilayer. Residues 148 to 178 (NMNEIIQTKEYEGNMTWKSKLRSAMYLSNTT) lie on the Extracellular side of the membrane. Asparagine 161 and asparagine 176 each carry an N-linked (GlcNAc...) asparagine glycan. A helical transmembrane segment spans residues 179-199 (VTILANLVPFILTLISFLLLI). Over 200–229 (CSLCKHLKKMQLRDKGSQDPSTKVHIKALQ) the chain is Cytoplasmic. A helical membrane pass occupies residues 230 to 249 (TVISLSLCAIYFLSIMISSW). Residues 250-258 (SLGRVENKA) are Extracellular-facing. The chain crosses the membrane as a helical span at residues 259 to 279 (IFMFCKAIRFSYPSAHAFILI). At 280–308 (WGNKKLKQTLLSVLWNVRYCVKGQKLQSP) the chain is on the cytoplasmic side.

It belongs to the G-protein coupled receptor T2R family.

The protein resides in the membrane. Its subcellular location is the cell projection. The protein localises to the cilium membrane. Functionally, gustducin-coupled receptor immplicated in the perception of bitter compounds in the oral cavity and the gastrointestinal tract. Signals through PLCB2 and the calcium-regulated cation channel TRPM5. Activated by the sulfonyl amide sweeteners saccharin and acesulfame K. In airway epithelial cells, binding of bitter compounds increases the intracellular calcium ion concentration and stimulates ciliary beat frequency. May act as chemosensory receptors in airway epithelial cells to detect and eliminate potential noxious agents from the airways. This is Taste receptor type 2 member 43 (TAS2R43) from Macaca mulatta (Rhesus macaque).